Reading from the N-terminus, the 407-residue chain is Serine/threonine transporter SstT (407 aa).

The next 9 membrane-spanning stretches (helical) occupy residues 12-32, 42-62, 81-101, 141-161, 179-199, 218-238, 245-267, 288-308, and 330-350; these read GNLIVQICIGIVLGILIGISS, LGILFTSALKAIAPMLVFILI, IIILYIVGTFLASACAVLANF, ALSSGNYLGILTWAIAGGIAL, VLKIVKFIVKLAPFGIFGLVA, ILLVTTMLFVTFVINALIVFF, FPLIFICLRHSAFFAFFTRSSAA, ISIPLGATINMAGAAVTIAIL, and IIATFAACGASGVAGGSLLLI.

Belongs to the dicarboxylate/amino acid:cation symporter (DAACS) (TC 2.A.23) family.

The protein localises to the cell inner membrane. The catalysed reaction is L-serine(in) + Na(+)(in) = L-serine(out) + Na(+)(out). It carries out the reaction L-threonine(in) + Na(+)(in) = L-threonine(out) + Na(+)(out). Its function is as follows. Involved in the import of serine and threonine into the cell, with the concomitant import of sodium (symport system). This chain is Serine/threonine transporter SstT, found in Campylobacter jejuni subsp. jejuni serotype O:6 (strain 81116 / NCTC 11828).